The primary structure comprises 417 residues: Hyaluronidase-3 (417 aa).

Residues 1 to 20 (MTTQLGPALVLGVALCLGCG) form the signal peptide. Disulfide bonds link C42–C331, C205–C220, C356–C367, C361–C395, and C397–C406. An N-linked (GlcNAc...) asparagine glycan is attached at N69. The active-site Proton donor is E129. Residue N215 is glycosylated (N-linked (GlcNAc...) asparagine). The 56-residue stretch at 352–407 (AAMACSHQRCHGHGRCARRDPGQMEAFLHLWPDGSLGDWKSFSCHCYWGWAGPTCQ) folds into the EGF-like domain.

The protein belongs to the glycosyl hydrolase 56 family. N-glycosylated. In terms of tissue distribution, expressed in sperm. Highly expressed in epidermis of the skin, where it is expressed intracellularily in the deep horny layer (at protein level). Bone marrow, testis and kidney.

Its subcellular location is the secreted. The protein localises to the cell membrane. It localises to the cytoplasmic vesicle. The protein resides in the secretory vesicle. It is found in the acrosome. Its subcellular location is the endoplasmic reticulum. The protein localises to the early endosome. The enzyme catalyses Random hydrolysis of (1-&gt;4)-linkages between N-acetyl-beta-D-glucosamine and D-glucuronate residues in hyaluronate.. Its function is as follows. Facilitates sperm penetration into the layer of cumulus cells surrounding the egg by digesting hyaluronic acid. Involved in induction of the acrosome reaction in the sperm. Involved in follicular atresia, the breakdown of immature ovarian follicles that are not selected to ovulate. Induces ovarian granulosa cell apoptosis, possibly via apoptotic signaling pathway involving CASP8 and CASP3 activation, and poly(ADP-ribose) polymerase (PARP) cleavage. Has no hyaluronidase activity in embryonic fibroblasts in vitro. Has no hyaluronidase activity in granulosa cells in vitro. The chain is Hyaluronidase-3 (HYAL3) from Homo sapiens (Human).